Reading from the N-terminus, the 147-residue chain is Hemoglobin subunit epsilon (147 aa).

The 145-residue stretch at 3–147 (HFTAEEKAII…VATALAHKYH (145 aa)) folds into the Globin domain. Phosphoserine occurs at positions 14 and 51. Heme b-binding residues include histidine 64 and histidine 93.

The protein belongs to the globin family. As to quaternary structure, heterotetramer of two alpha chains and two epsilon chains in early embryonic hemoglobin Gower-2; two zeta chains and two epsilon chains in early embryonic hemoglobin Gower-1. As to expression, red blood cells.

Functionally, the epsilon chain is a beta-type chain of early mammalian embryonic hemoglobin. This chain is Hemoglobin subunit epsilon (HBE1), found in Otolemur crassicaudatus (Brown greater galago).